The sequence spans 720 residues: Phenylalanine--tRNA ligase beta subunit, chloroplastic (720 aa).

The 86-residue stretch at 319–404 folds into the B5 domain; it reads NSTLNIDISL…RVYGYNQFQS (86 aa). Residues Asp-382, Asp-388, Glu-391, and Glu-392 each coordinate Mg(2+). One can recognise an FDX-ACB domain in the interval 626–719; it reads SKYPCITRDL…IIKKLNLEIR (94 aa).

Belongs to the phenylalanyl-tRNA synthetase beta subunit family. Type 1 subfamily. Tetramer of two alpha and two beta subunits. It depends on Mg(2+) as a cofactor.

The protein localises to the plastid. Its subcellular location is the chloroplast. It catalyses the reaction tRNA(Phe) + L-phenylalanine + ATP = L-phenylalanyl-tRNA(Phe) + AMP + diphosphate + H(+). The chain is Phenylalanine--tRNA ligase beta subunit, chloroplastic (pheT) from Porphyra purpurea (Red seaweed).